We begin with the raw amino-acid sequence, 161 residues long: S-ribosylhomocysteine lyase (161 aa).

His57, His61, and Cys127 together coordinate Fe cation.

Belongs to the LuxS family. Homodimer. Requires Fe cation as cofactor.

It catalyses the reaction S-(5-deoxy-D-ribos-5-yl)-L-homocysteine = (S)-4,5-dihydroxypentane-2,3-dione + L-homocysteine. Involved in the synthesis of autoinducer 2 (AI-2) which is secreted by bacteria and is used to communicate both the cell density and the metabolic potential of the environment. The regulation of gene expression in response to changes in cell density is called quorum sensing. Catalyzes the transformation of S-ribosylhomocysteine (RHC) to homocysteine (HC) and 4,5-dihydroxy-2,3-pentadione (DPD). The sequence is that of S-ribosylhomocysteine lyase from Streptococcus equi subsp. equi (strain 4047).